Here is a 373-residue protein sequence, read N- to C-terminus: Transcription factor NF-E2 45 kDa subunit (373 aa).

The required for interaction with MAPK8 stretch occupies residues 1–83 (MSPCPPQQSR…SGFPLPPPPY (83 aa)). A transactivation domain region spans residues 1-206 (MSPCPPQQSR…PAAETPLALE (206 aa)). 2 consecutive short sequence motifs (PXY motif) follow at residues 61 to 65 (PPTTY) and 79 to 83 (PPPPY). Residues 127 to 150 (LDIGLPAGPPKPQEDPESDSGLSL) are disordered. Ser-157 is modified (phosphoserine; by MAPK8). Ser-170 is modified (phosphoserine; by PKA). A disordered region spans residues 205–226 (LEPSSGPVRAKPTARGEAGSRD). Residues 266 to 329 (LVRDIRRRGK…EVMRQQLTEL (64 aa)) enclose the bZIP domain. The basic motif stretch occupies residues 268 to 287 (RDIRRRGKNKVAAQNCRKRK). Residues 291-298 (IVQLEREL) are leucine-zipper. Lys-368 participates in a covalent cross-link: Glycyl lysine isopeptide (Lys-Gly) (interchain with G-Cter in SUMO1).

The protein belongs to the bZIP family. CNC subfamily. Homodimer; can bind DNA as a homodimer. Erythroid transcription activator nuclear factor erythroid-derived 2 (NF-E2), composed of a heterodimer of NFE2 and MAFK, possesses transactivation activity on beta-globin. Also forms high affinity heterodimer with MAFG; the interaction promotes erythropoiesis. Interacts (via the PXY motif 1) with ITCH (via the WW 1 domain); the interaction promotes 'Lys63'-linked ubiquitination of NFE2, translocates it to the cytoplasm and inhibits its transactivation activity. Interacts with KMT2D/MLL2; the interaction promotes transactivation of the beta-globin locus. Interacts with MAPK8 (phosphorylated form); the interaction leads to phosphorylation of NFE2 in undifferentiated cells. Post-translationally, phosphorylated on serine residues. In undifferentiated erythrocytes, phosphorylated by MAPK8 which then leads to ubiquitination and protein degradation. Sumoylated. Sumoylation is required for translocation to nuclear bodies PODs, anchoring to the gene loci, and transactivation of the beta-globin gene. In terms of processing, ubiquitinated mainly by 'Lys63'-linked ubiquitin. Polyubiquitination with 'Lys63'-linked ubiquitin by ITCH retains NFE2 in the cytoplasm preventing its transactivation activity. In undifferentiated erythrocyte, ubiquitinated after MAPK8-mediatd phosphorylation leading to protein degradation. As to expression, expressed in hematopoietic cells and also in colon and testis.

The protein localises to the nucleus. It localises to the PML body. Its subcellular location is the cytoplasm. Functionally, component of the NF-E2 complex essential for regulating erythroid and megakaryocytic maturation and differentiation. Binds to the hypersensitive site 2 (HS2) of the beta-globin control region (LCR). This subunit (NFE2) recognizes the TCAT/C sequence of the AP-1-like core palindrome present in a number of erythroid and megakaryocytic gene promoters. Requires MAFK or other small MAF proteins for binding to the NF-E2 motif. May play a role in all aspects of hemoglobin production from globin and heme synthesis to procurement of iron. The protein is Transcription factor NF-E2 45 kDa subunit (NFE2) of Homo sapiens (Human).